Reading from the N-terminus, the 769-residue chain is Probable protease Ga0334635_1659 (769 aa).

The interval 118-167 (VARGSSDNNGAPPLSFTLSHGDPKSDPEPSSPSRLVNTGLSEAERPESPL) is disordered.

In terms of biological role, probably a dedicated protease for substrate gasdermin bGSDM; cleaves the bGSDM precursor, releasing the pore-forming moiety, which integrates into the membrane and triggers cell death. Involved in defense against bacteriophages. Expression of gasdermin bGSDM and this neighboring protease is toxic in E.coli. In Vitiosangium sp. (strain GDMCC 1.1324), this protein is Probable protease Ga0334635_1659.